The sequence spans 434 residues: Maltoporin (434 aa).

The first 25 residues, 1–25, serve as a signal peptide directing secretion; the sequence is MMTTLRKLPLALAIAAGVLTTQAMA.

The protein belongs to the porin LamB (TC 1.B.3) family. In terms of assembly, homotrimer formed of three 18-stranded antiparallel beta-barrels, containing three independent channels.

The protein resides in the cell outer membrane. The catalysed reaction is beta-maltose(in) = beta-maltose(out). In terms of biological role, involved in the transport of maltose and maltodextrins. This Serratia proteamaculans (strain 568) protein is Maltoporin.